We begin with the raw amino-acid sequence, 120 residues long: Ribonuclease P protein component (120 aa).

It belongs to the RnpA family. As to quaternary structure, consists of a catalytic RNA component (M1 or rnpB) and a protein subunit.

It carries out the reaction Endonucleolytic cleavage of RNA, removing 5'-extranucleotides from tRNA precursor.. Functionally, RNaseP catalyzes the removal of the 5'-leader sequence from pre-tRNA to produce the mature 5'-terminus. It can also cleave other RNA substrates such as 4.5S RNA. The protein component plays an auxiliary but essential role in vivo by binding to the 5'-leader sequence and broadening the substrate specificity of the ribozyme. In Rickettsia bellii (strain RML369-C), this protein is Ribonuclease P protein component.